The chain runs to 260 residues: MPVHLLIVDALNLIRRIHAVQGSPCITACQHALHQLIQNSQPTHAVAVFDDEDRDTSWRHQLLPDYKAGRTPMPDNLKQELPQIKAAFAAAGVASWHSPGNEADDLAATLATKLSSAGHQATIVSTDKGYCQLLAPHIQIRDYFQKRWLDLPFVEQEFGVSPQQLTDYWGLAGISSSKIPGVAGIGPKSAAQLLQQAGSLEALYQQLDGVPEKWRKKLEQHKEMALVSRQIATLRTDLTLNGNLQQLRLPVQSVAQSDPH.

Asp104 lines the Mg(2+) pocket. Residues 160-249 form the 5'-3' exonuclease domain; sequence VSPQQLTDYW…LNGNLQQLRL (90 aa). Residues Leu171, Ala172, Pro180, Val182, and Ile185 each coordinate K(+). Residues 184–189 are interaction with DNA; the sequence is GIGPKS.

The protein belongs to the Xni family. Mg(2+) serves as cofactor. Requires K(+) as cofactor.

Has flap endonuclease activity. During DNA replication, flap endonucleases cleave the 5'-overhanging flap structure that is generated by displacement synthesis when DNA polymerase encounters the 5'-end of a downstream Okazaki fragment. The chain is Flap endonuclease Xni from Pectobacterium carotovorum subsp. carotovorum (strain PC1).